The primary structure comprises 522 residues: Poly(A) polymerase (522 aa).

Residues 63–65 (YGS), 76–78 (DID), Asp-130, Lys-193, Tyr-202, and 211–212 (GI) each bind ATP. Mg(2+) is bound by residues Asp-76, Asp-78, and Asp-130. The disordered stretch occupies residues 475 to 522 (QLKAKEENSIPNEEKKEQLKKEMKQEANTIVKNSSTDDDFMKRFTRKN). The span at 476-499 (LKAKEENSIPNEEKKEQLKKEMKQ) shows a compositional bias: basic and acidic residues.

This sequence belongs to the poly(A) polymerase family. Mg(2+) serves as cofactor. It depends on Mn(2+) as a cofactor.

It is found in the cytoplasm. The protein resides in the nucleus. The catalysed reaction is RNA(n) + ATP = RNA(n)-3'-adenine ribonucleotide + diphosphate. Its function is as follows. Polymerase that creates the 3'-poly(A) tail of mRNA's. May acquire specificity through interaction with a cleavage and polyadenylation factor. The sequence is that of Poly(A) polymerase from Entamoeba histolytica (strain ATCC 30459 / HM-1:IMSS / ABRM).